A 1098-amino-acid chain; its full sequence is MEGWEEVSILAAILYSFPASKDPVTSLLFDSVHNLLWCGDSSGSARSFTPNAGYPFQLYPYTKFPATTSPLPVVQQRNHSRGILSLSQNCVNLNSRRGLSQATFTAASVTDSANVLRNLSCMTTLGTGNDIIVGGTHSLGSLDMQKCVATGFDHSGNLSFVDSVAKTLVLGTTDGTVELFDTASNSSVKSFPAHSGLLSDMAVQGNYIATCGYSARRRYDHKNSSAAGGTSYITDPLVHLIDTRMMKSLSPIPFPNGASFVRFHPKLPNIVIVASSTGVLEFVDIFDQSKLNVYQVNMSPASPGISRMEISDNGEYICCSEGRSLHLWSFTSDTNFVNFPAPLEEQDIPAPLPPPFEVDDPVPLSSVGMPYYKDYLLSNYATDMVFTKELSKVPAEVDTSLGHGAFVPYDRTAHGPRNISQPYQSLREPPGSNSNAPRFISERDGESNENMIHAENSIFHLKSPTSVPHCYSRLQIQYSKFGVDDFDFDYYNKSNGACSGLENHLDNSYTNALLQLYRAAPAFYNSVVESLLPEYLPNGPEIISWNPQGSSLLIELGYLFDMMHKAEGRNVKIANFSQLLTQSASAASAGVINTDEEKSLNADGLREIIIRFNHYLLSELTSNQRERRHTNSEKIEDIMGIKLEMQIKSQCTETETHTGSQLIFDLTSPPEQYLNKLAMLRRAEKTEITILSYMDYFMDQYKSASCRECEARGRPHAVNARQRVVRLPKVLSINLSMTNFELQQIHNCRGWLVPEFHIGEDERFVDAGRGRKYELLGYVCEISHGPGVKRGAHNLVSFVKIKGQWYLFNDFLVMPIAQEEALNLSYSWKKPVIIVYSEPGQDFSYFETSTFKKIQDLDTSIIYRDHFVRAAREGHRQEYKLLTKQEAPEIGTLIAIDAEFVVSEPEQLEIRYTGTRKLIKPKKLTLARVSVLRGNGPNIGVPFIDDYIVWTGHIEDYLTSFSGIEPGDLDPEVSKKALVTLQTVYRKLWLLLNMGCVFVGHGLQNDFRCINLVVPKTQVRDTADLFYLPEFKRKLSLKFLAYVLLKEKVQTGNHDSVEDAYTALMLFQKHEELTRTGDLETVLYQVYMEGQQRRFRAP.

WD repeat units follow at residues alanine 19–leucine 58, threonine 150–serine 190, proline 253–valine 293, and proline 300–asparagine 338. The tract at residues proline 340–serine 466 is linker. Residues arginine 417–glutamate 442 form a disordered region. Residues serine 466 to proline 839 enclose the USP domain. The 174-residue stretch at isoleucine 894–phenylalanine 1067 folds into the Exonuclease domain. Aspartate 897, glutamate 899, aspartate 1006, and aspartate 1059 together coordinate a divalent metal cation.

The protein belongs to the peptidase C19 family. PAN2 subfamily. As to quaternary structure, forms a heterotrimer with an asymmetric homodimer of the regulatory subunit PAN3 to form the poly(A)-nuclease (PAN) deadenylation complex. Requires a divalent metal cation as cofactor.

It is found in the cytoplasm. It carries out the reaction Exonucleolytic cleavage of poly(A) to 5'-AMP.. Positively regulated by the regulatory subunit PAN3. Functionally, catalytic subunit of the poly(A)-nuclease (PAN) deadenylation complex, one of two cytoplasmic mRNA deadenylases involved in mRNA turnover. PAN specifically shortens poly(A) tails of RNA and the activity is stimulated by poly(A)-binding protein PAB1. PAN deadenylation is followed by rapid degradation of the shortened mRNA tails by the CCR4-NOT complex. Deadenylated mRNAs are then degraded by two alternative mechanisms, namely exosome-mediated 3'-5' exonucleolytic degradation, or deadenylation-dependent mRNA decaping and subsequent 5'-3' exonucleolytic degradation by XRN1. May also be involved in post-transcriptional maturation of mRNA poly(A) tails. In Meyerozyma guilliermondii (strain ATCC 6260 / CBS 566 / DSM 6381 / JCM 1539 / NBRC 10279 / NRRL Y-324) (Yeast), this protein is PAN2-PAN3 deadenylation complex catalytic subunit PAN2.